Consider the following 285-residue polypeptide: Dermonecrotic toxin LiSicTox-alphaIA2aii (285 aa).

Residues 1–5 (DVEER) constitute a propeptide that is removed on maturation. Residue His-17 is part of the active site. 2 residues coordinate Mg(2+): Glu-37 and Asp-39. His-53 functions as the Nucleophile in the catalytic mechanism. Cystine bridges form between Cys-57-Cys-63 and Cys-59-Cys-202. Residue Asp-97 coordinates Mg(2+). A glycan (N-linked (GlcNAc...) asparagine) is linked at Asn-262.

This sequence belongs to the arthropod phospholipase D family. Class II subfamily. Class IIa sub-subfamily. The cofactor is Mg(2+). As to expression, expressed by the venom gland.

The protein resides in the secreted. It catalyses the reaction an N-(acyl)-sphingosylphosphocholine = an N-(acyl)-sphingosyl-1,3-cyclic phosphate + choline. The catalysed reaction is an N-(acyl)-sphingosylphosphoethanolamine = an N-(acyl)-sphingosyl-1,3-cyclic phosphate + ethanolamine. It carries out the reaction a 1-acyl-sn-glycero-3-phosphocholine = a 1-acyl-sn-glycero-2,3-cyclic phosphate + choline. The enzyme catalyses a 1-acyl-sn-glycero-3-phosphoethanolamine = a 1-acyl-sn-glycero-2,3-cyclic phosphate + ethanolamine. In terms of biological role, dermonecrotic toxins cleave the phosphodiester linkage between the phosphate and headgroup of certain phospholipids (sphingolipid and lysolipid substrates), forming an alcohol (often choline) and a cyclic phosphate. This toxin acts on sphingomyelin (SM) with high activity. It may also act on ceramide phosphoethanolamine (CPE), lysophosphatidylcholine (LPC) and lysophosphatidylethanolamine (LPE), but not on lysophosphatidylserine (LPS), and lysophosphatidylglycerol (LPG). It acts by transphosphatidylation, releasing exclusively cyclic phosphate products as second products. Shows high hemolytic activity. Induces dermonecrosis, vascular permeability, edema, inflammatory response, and platelet aggregation. Also shows cytotoxicity against renal epithelial cells. In addition, also induces hemolysis in a complement-dependent manner and probably also in a complement-independent manner. The hemolysis provoked in a complement-independent manner may be composed of several steps. The toxin may bind to erythrocyte membranes, may hydrolyze membrane phospholipids (SM and LPC) thus generating metabolism products that may cause hemolysis, probably by provoking an increase of calcium inside cells. The calcium influx may be due to the opening of L-type calcium channels, since L-type calcium channel blockers inhibit calcium influx. In vivo, is lethal to mice when intraperitoneally injected. The protein is Dermonecrotic toxin LiSicTox-alphaIA2aii of Loxosceles intermedia (Brown spider).